A 661-amino-acid polypeptide reads, in one-letter code: Bifunctional polymyxin resistance protein ArnA (661 aa).

Residues methionine 1–isoleucine 304 form a formyltransferase ArnAFT region. Histidine 104 (proton donor; for formyltransferase activity) is an active-site residue. (6R)-10-formyltetrahydrofolate-binding positions include arginine 114 and valine 136–aspartate 140. The interval arginine 314–proline 661 is dehydrogenase ArnADH. Residues aspartate 347 and aspartate 368–isoleucine 369 contribute to the NAD(+) site. Residues alanine 393, tyrosine 398, and threonine 432–serine 433 each bind UDP-alpha-D-glucuronate. Glutamate 434 serves as the catalytic Proton acceptor; for decarboxylase activity. Residues arginine 460, asparagine 492, lysine 526 to arginine 535, and tyrosine 613 contribute to the UDP-alpha-D-glucuronate site. Arginine 619 serves as the catalytic Proton donor; for decarboxylase activity.

It in the N-terminal section; belongs to the Fmt family. UDP-L-Ara4N formyltransferase subfamily. This sequence in the C-terminal section; belongs to the NAD(P)-dependent epimerase/dehydratase family. UDP-glucuronic acid decarboxylase subfamily. Homohexamer, formed by a dimer of trimers.

The enzyme catalyses UDP-alpha-D-glucuronate + NAD(+) = UDP-beta-L-threo-pentopyranos-4-ulose + CO2 + NADH. The catalysed reaction is UDP-4-amino-4-deoxy-beta-L-arabinose + (6R)-10-formyltetrahydrofolate = UDP-4-deoxy-4-formamido-beta-L-arabinose + (6S)-5,6,7,8-tetrahydrofolate + H(+). The protein operates within nucleotide-sugar biosynthesis; UDP-4-deoxy-4-formamido-beta-L-arabinose biosynthesis; UDP-4-deoxy-4-formamido-beta-L-arabinose from UDP-alpha-D-glucuronate: step 1/3. It functions in the pathway nucleotide-sugar biosynthesis; UDP-4-deoxy-4-formamido-beta-L-arabinose biosynthesis; UDP-4-deoxy-4-formamido-beta-L-arabinose from UDP-alpha-D-glucuronate: step 3/3. It participates in bacterial outer membrane biogenesis; lipopolysaccharide biosynthesis. Functionally, bifunctional enzyme that catalyzes the oxidative decarboxylation of UDP-glucuronic acid (UDP-GlcUA) to UDP-4-keto-arabinose (UDP-Ara4O) and the addition of a formyl group to UDP-4-amino-4-deoxy-L-arabinose (UDP-L-Ara4N) to form UDP-L-4-formamido-arabinose (UDP-L-Ara4FN). The modified arabinose is attached to lipid A and is required for resistance to polymyxin and cationic antimicrobial peptides. The chain is Bifunctional polymyxin resistance protein ArnA from Klebsiella pneumoniae subsp. pneumoniae (strain ATCC 700721 / MGH 78578).